The following is a 1450-amino-acid chain: DNA-directed RNA polymerase RPB1 homolog (1450 aa).

This sequence belongs to the RNA polymerase beta' chain family. As to quaternary structure, part of the viral DNA-directed RNA polymerase that consists of 8 polII-like subunits (RPB1, RPB2, RPB3, RPB5, RPB6, RPB7, RPB9, RPB10), a capping enzyme and a termination factor.

It is found in the virion. The catalysed reaction is RNA(n) + a ribonucleoside 5'-triphosphate = RNA(n+1) + diphosphate. Its function is as follows. Catalytic component of the DNA-directed RNA polymerase (RNAP) that catalyzes the transcription in the cytoplasm of viral DNA into RNA using the four ribonucleoside triphosphates as substrates. Forms the polymerase active center together with RPB2. Part of the core element with the central large cleft, the clamp element that moves to open and close the cleft and the jaws that are thought to grab the incoming DNA template. The sequence is that of DNA-directed RNA polymerase RPB1 homolog from African swine fever virus (isolate Warthog/Namibia/Wart80/1980) (ASFV).